Reading from the N-terminus, the 321-residue chain is Ubiquitin carboxyl-terminal hydrolase ubh-4 (321 aa).

In terms of domain architecture, UCH catalytic spans 6-220; the sequence is SWCLIESDPG…ITFNLMALVP (215 aa). Catalysis depends on Cys83, which acts as the Nucleophile. The active-site Proton donor is the His158. The 29-residue stretch at 273–301 folds into the ULD domain; that stretch reads NYTPFVIELMKILAKEGKLVGLVDNAYQA.

Belongs to the peptidase C12 family. As to quaternary structure, interacts with proteasome 19S subunit rpn-13. In terms of tissue distribution, highly expressed in intestine and to a lesser extent in other tissues including muscles and neurons.

The catalysed reaction is Thiol-dependent hydrolysis of ester, thioester, amide, peptide and isopeptide bonds formed by the C-terminal Gly of ubiquitin (a 76-residue protein attached to proteins as an intracellular targeting signal).. Ubiquitin-protein hydrolase involved both in the processing of ubiquitin precursors and of ubiquitinated proteins. This enzyme is a thiol protease that recognizes and hydrolyzes a peptide bond at the C-terminal glycine of ubiquitin. The protein is Ubiquitin carboxyl-terminal hydrolase ubh-4 of Caenorhabditis elegans.